Consider the following 406-residue polypeptide: LIM/homeobox protein Lhx2 (406 aa).

LIM zinc-binding domains follow at residues 53-105 (CAGC…CKED) and 115-168 (CARC…CRLH). Positions 250–270 (DAEHLDRDQPYPSSQKTKRMR) are disordered. The segment at residues 266-325 (TKRMRTSFKHHQLRTMKSYFAINHNPDAKDLKQLAQKTGLTKRVLQVWFQNARAKFRRNL) is a DNA-binding region (homeobox). The Nuclear localization signal motif lies at 307–323 (KRVLQVWFQNARAKFRR). The span at 328–356 (QENTGVDKTSDATLQTGTPSGPASELSNA) shows a compositional bias: polar residues. Disordered stretches follow at residues 328–375 (QENT…SPTL) and 387–406 (GNLEGHEPHSPSQTTLTNLF). Positions 357–375 (SLSPSSTPTTLTDLTSPTL) are enriched in low complexity. Positions 396–406 (SPSQTTLTNLF) are enriched in polar residues.

Interacts (via LIM domains) with CITED2. Interacts with POU4F2 isoform 1.

Its subcellular location is the nucleus. Acts as a transcriptional activator. Stimulates the promoter of the alpha-glycoprotein gene. Transcriptional regulatory protein involved in the control of cell differentiation in developing lymphoid and neural cell types. The polypeptide is LIM/homeobox protein Lhx2 (Lhx2) (Mus musculus (Mouse)).